Consider the following 132-residue polypeptide: Small ribosomal subunit protein uS8 (132 aa).

It belongs to the universal ribosomal protein uS8 family. In terms of assembly, part of the 30S ribosomal subunit. Contacts proteins S5 and S12.

In terms of biological role, one of the primary rRNA binding proteins, it binds directly to 16S rRNA central domain where it helps coordinate assembly of the platform of the 30S subunit. In Clostridium tetani (strain Massachusetts / E88), this protein is Small ribosomal subunit protein uS8.